Here is a 499-residue protein sequence, read N- to C-terminus: Chitinase B (499 aa).

The signal sequence occupies residues 1–41 (MSTRKAVIGYYFIPTNQINNYTETDTSVVPFPVSNITPAKA). Residues 42 to 425 (KQLTHINFSF…AALDRYFNAA (384 aa)) enclose the GH18 domain. Chitin is bound by residues 68–69 (DA) and 95–98 (GGWY). Glutamate 144 acts as the Proton donor in catalysis. Chitin-binding positions include tyrosine 145, 212 to 215 (MTYD), and tryptophan 403. The region spanning 438–498 (LRYTGVGPGN…DSAWLKVGRL (61 aa)) is the Chitin-binding type-3 domain.

The protein belongs to the glycosyl hydrolase 18 family. Chitinase class II subfamily.

The catalysed reaction is Random endo-hydrolysis of N-acetyl-beta-D-glucosaminide (1-&gt;4)-beta-linkages in chitin and chitodextrins.. The chain is Chitinase B (chiB) from Serratia marcescens.